A 661-amino-acid polypeptide reads, in one-letter code: Heme transporter BhuA (661 aa).

The first 23 residues, 1-23 (MKFTRTLVLASTSLLATVATSQA), serve as a signal peptide directing secretion. In terms of domain architecture, TBDR plug spans 48–159 (KDNIEATGGT…AAGAIRYETV (112 aa)). The 492-residue stretch at 170–661 (TFGARIIGSY…TFTFQTAFKF (492 aa)) folds into the TBDR beta-barrel domain.

It belongs to the TonB-dependent receptor family.

It localises to the cell outer membrane. Its function is as follows. Heme transporter. In Brucella ovis (strain ATCC 25840 / 63/290 / NCTC 10512), this protein is Heme transporter BhuA (bhuA).